The primary structure comprises 57 residues: Potassium channel toxin alpha-KTx 1.5 (57 aa).

The signal sequence occupies residues 1–20 (MKISFLLLALVICSIGWSEA). A Pyrrolidone carboxylic acid modification is found at glutamine 21. 3 cysteine pairs are disulfide-bonded: cysteine 27–cysteine 48, cysteine 33–cysteine 53, and cysteine 37–cysteine 55.

It belongs to the short scorpion toxin superfamily. Potassium channel inhibitor family. Alpha-KTx 01 subfamily. In terms of tissue distribution, expressed by the venom gland.

The protein resides in the secreted. In terms of biological role, potent blocker of both large-conductance calcium-activated potassium channels (KCa1.1/KCNMA1) and voltage-gated potassium channels (Kv1.3/KCNA3). Has also been shown to moderately inhibit Kv1.2/KCNA2 and weakly inhibit Kv1.1/KCNA1 channels, as well as 5-hydroxytryptamine 3 receptors (HTR3A). In Olivierus martensii (Manchurian scorpion), this protein is Potassium channel toxin alpha-KTx 1.5.